The following is a 219-amino-acid chain: UPF0502 protein Gura_0277 (219 aa).

Belongs to the UPF0502 family.

This chain is UPF0502 protein Gura_0277, found in Geotalea uraniireducens (strain Rf4) (Geobacter uraniireducens).